Consider the following 1074-residue polypeptide: Carbamoyl phosphate synthase large chain (1074 aa).

Positions 1–399 are carboxyphosphate synthetic domain; sequence MPKRSDIKKV…ALMKAIRSLD (399 aa). The ATP site is built by Arg-129, Arg-169, Gly-175, Gly-176, Glu-208, Val-210, Glu-215, Gly-241, Ile-242, His-243, Gln-284, and Glu-296. The 193-residue stretch at 133-325 folds into the ATP-grasp 1 domain; sequence KKAMERIGEP…IARVTAKIAI (193 aa). Gln-284, Glu-296, and Asn-298 together coordinate Mg(2+). Gln-284, Glu-296, and Asn-298 together coordinate Mn(2+). Residues 400–543 form an oligomerization domain region; sequence IDIDLGYNGK…YSTYDEECEL (144 aa). Residues 544 to 933 are carbamoyl phosphate synthetic domain; that stretch reads NPSDNKKVLI…FKAEMSAENN (390 aa). In terms of domain architecture, ATP-grasp 2 spans 674 to 865; it reads NKLLNKLGIP…LAKIAAKVMA (192 aa). 10 residues coordinate ATP: Arg-710, Asp-749, Leu-751, Glu-756, Gly-781, Ile-782, His-783, Ser-784, Gln-824, and Glu-836. Mg(2+)-binding residues include Gln-824, Glu-836, and Asn-838. Residues Gln-824, Glu-836, and Asn-838 each contribute to the Mn(2+) site. The MGS-like domain occupies 932 to 1074; it reads NNLPLDGIVF…YHREVRYRAL (143 aa). Positions 934–1074 are allosteric domain; sequence LPLDGIVFIS…YHREVRYRAL (141 aa).

The protein belongs to the CarB family. In terms of assembly, composed of two chains; the small (or glutamine) chain promotes the hydrolysis of glutamine to ammonia, which is used by the large (or ammonia) chain to synthesize carbamoyl phosphate. Tetramer of heterodimers (alpha,beta)4. Mg(2+) is required as a cofactor. Mn(2+) serves as cofactor.

It catalyses the reaction hydrogencarbonate + L-glutamine + 2 ATP + H2O = carbamoyl phosphate + L-glutamate + 2 ADP + phosphate + 2 H(+). It carries out the reaction hydrogencarbonate + NH4(+) + 2 ATP = carbamoyl phosphate + 2 ADP + phosphate + 2 H(+). Its pathway is amino-acid biosynthesis; L-arginine biosynthesis; carbamoyl phosphate from bicarbonate: step 1/1. It functions in the pathway pyrimidine metabolism; UMP biosynthesis via de novo pathway; (S)-dihydroorotate from bicarbonate: step 1/3. Its function is as follows. Large subunit of the glutamine-dependent carbamoyl phosphate synthetase (CPSase). CPSase catalyzes the formation of carbamoyl phosphate from the ammonia moiety of glutamine, carbonate, and phosphate donated by ATP, constituting the first step of 2 biosynthetic pathways, one leading to arginine and/or urea and the other to pyrimidine nucleotides. The large subunit (synthetase) binds the substrates ammonia (free or transferred from glutamine from the small subunit), hydrogencarbonate and ATP and carries out an ATP-coupled ligase reaction, activating hydrogencarbonate by forming carboxy phosphate which reacts with ammonia to form carbamoyl phosphate. The protein is Carbamoyl phosphate synthase large chain of Methanothrix thermoacetophila (strain DSM 6194 / JCM 14653 / NBRC 101360 / PT) (Methanosaeta thermophila).